We begin with the raw amino-acid sequence, 96 residues long: Large ribosomal subunit protein eL43 (96 aa).

The segment at 41–62 (CPVCGFMKLKRISTSIWECKKC) adopts a C4-type zinc-finger fold.

Belongs to the eukaryotic ribosomal protein eL43 family. Zn(2+) is required as a cofactor.

This is Large ribosomal subunit protein eL43 from Methanococcus aeolicus (strain ATCC BAA-1280 / DSM 17508 / OCM 812 / Nankai-3).